The primary structure comprises 171 residues: 3-hydroxydecanoyl-[acyl-carrier-protein] dehydratase (171 aa).

Residue His-70 is part of the active site.

This sequence belongs to the thioester dehydratase family. FabA subfamily. In terms of assembly, homodimer.

Its subcellular location is the cytoplasm. It catalyses the reaction a (3R)-hydroxyacyl-[ACP] = a (2E)-enoyl-[ACP] + H2O. The catalysed reaction is (3R)-hydroxydecanoyl-[ACP] = (2E)-decenoyl-[ACP] + H2O. It carries out the reaction (2E)-decenoyl-[ACP] = (3Z)-decenoyl-[ACP]. It participates in lipid metabolism; fatty acid biosynthesis. Necessary for the introduction of cis unsaturation into fatty acids. Catalyzes the dehydration of (3R)-3-hydroxydecanoyl-ACP to E-(2)-decenoyl-ACP and then its isomerization to Z-(3)-decenoyl-ACP. Can catalyze the dehydratase reaction for beta-hydroxyacyl-ACPs with saturated chain lengths up to 16:0, being most active on intermediate chain length. In Shewanella sediminis (strain HAW-EB3), this protein is 3-hydroxydecanoyl-[acyl-carrier-protein] dehydratase.